Here is a 287-residue protein sequence, read N- to C-terminus: Ribonuclease Z (287 aa).

Residues His64, His66, Asp68, His69, His124, Asp191, and His250 each coordinate Zn(2+). Asp68 acts as the Proton acceptor in catalysis.

It belongs to the RNase Z family. In terms of assembly, homodimer. Zn(2+) is required as a cofactor.

It catalyses the reaction Endonucleolytic cleavage of RNA, removing extra 3' nucleotides from tRNA precursor, generating 3' termini of tRNAs. A 3'-hydroxy group is left at the tRNA terminus and a 5'-phosphoryl group is left at the trailer molecule.. Zinc phosphodiesterase, which displays some tRNA 3'-processing endonuclease activity. Probably involved in tRNA maturation, by removing a 3'-trailer from precursor tRNA. The sequence is that of Ribonuclease Z from Pyrobaculum aerophilum (strain ATCC 51768 / DSM 7523 / JCM 9630 / CIP 104966 / NBRC 100827 / IM2).